Here is a 622-residue protein sequence, read N- to C-terminus: DNA mismatch repair protein MutL (622 aa).

This sequence belongs to the DNA mismatch repair MutL/HexB family.

Its function is as follows. This protein is involved in the repair of mismatches in DNA. It is required for dam-dependent methyl-directed DNA mismatch repair. May act as a 'molecular matchmaker', a protein that promotes the formation of a stable complex between two or more DNA-binding proteins in an ATP-dependent manner without itself being part of a final effector complex. This chain is DNA mismatch repair protein MutL, found in Clostridium acetobutylicum (strain ATCC 824 / DSM 792 / JCM 1419 / IAM 19013 / LMG 5710 / NBRC 13948 / NRRL B-527 / VKM B-1787 / 2291 / W).